We begin with the raw amino-acid sequence, 419 residues long: S-adenosylmethionine synthase (419 aa).

Residue H14 coordinates ATP. D16 is a binding site for Mg(2+). K(+) is bound at residue E42. 2 residues coordinate L-methionine: E55 and Q98. Residues 98–108 (QSADINQGVDR) form a flexible loop region. Residues 164 to 166 (DAK), 242 to 243 (KF), D251, 257 to 258 (RK), A274, and K278 contribute to the ATP site. D251 contacts L-methionine. K282 is an L-methionine binding site.

Belongs to the AdoMet synthase family. As to quaternary structure, homotetramer; dimer of dimers. The cofactor is Mg(2+). Requires K(+) as cofactor.

The protein localises to the cytoplasm. It carries out the reaction L-methionine + ATP + H2O = S-adenosyl-L-methionine + phosphate + diphosphate. Its pathway is amino-acid biosynthesis; S-adenosyl-L-methionine biosynthesis; S-adenosyl-L-methionine from L-methionine: step 1/1. Catalyzes the formation of S-adenosylmethionine (AdoMet) from methionine and ATP. The overall synthetic reaction is composed of two sequential steps, AdoMet formation and the subsequent tripolyphosphate hydrolysis which occurs prior to release of AdoMet from the enzyme. This Cytophaga hutchinsonii (strain ATCC 33406 / DSM 1761 / CIP 103989 / NBRC 15051 / NCIMB 9469 / D465) protein is S-adenosylmethionine synthase.